The chain runs to 318 residues: MPREDRATWKSNYFLKIIQLLDDYPKCFIVGADNVGSKQMQQIRMSLRGKAVVLMGKNTMMRKAIRGHLENNPALEKLLPHIRGNVGFVFTKEDLTEIRDMLLANKVPAAARAGAIAPCEVTVPAQNTGLGPEKTSFFQALGITTKISRGTIEILSDVQLIKTGDKVGASEATLLNMLNISPFSFGLIIQQVFDNGSIYNPEVLDITEETLHSRFLEGVRNVASVCLQIGYPTVASVPHSIINGYKRVLALSVETDYTFPLAEKVKAFLADPSAFVAAAPVAAATTAAPAAAAAAPAKVEAKEESEESDEDMGFGLFD.

A Phosphotyrosine modification is found at Tyr24. Thr59 is subject to Phosphothreonine. A Glycyl lysine isopeptide (Lys-Gly) (interchain with G-Cter in ubiquitin) cross-link involves residue Lys264. Lys298 is covalently cross-linked (Glycyl lysine isopeptide (Lys-Gly) (interchain with G-Cter in SUMO1); alternate). Lys298 is covalently cross-linked (Glycyl lysine isopeptide (Lys-Gly) (interchain with G-Cter in SUMO2); alternate). Residues Lys298 to Asp318 are disordered. The span at Glu303–Met312 shows a compositional bias: acidic residues. A phosphoserine mark is found at Ser305 and Ser308.

The protein belongs to the universal ribosomal protein uL10 family. P0 forms a pentameric complex by interaction with dimers of P1 and P2. Identified in a IGF2BP1-dependent mRNP granule complex containing untranslated mRNAs. Interacts with APEX1. Interacts with FMR1. Ubiquitinated at Lys-264 by RNF14 and RNF25 in response to ribosome collisions (ribosome stalling).

The protein resides in the nucleus. Its subcellular location is the cytoplasm. In terms of biological role, ribosomal protein P0 is the functional equivalent of E.coli protein L10. The sequence is that of Large ribosomal subunit protein uL10 (RPLP0) from Sus scrofa (Pig).